The chain runs to 141 residues: Putative 8-oxo-dGTP diphosphatase 2 (141 aa).

A Nudix hydrolase domain is found at 2–131 (LNQIVVAGAI…WIADLARTLN (130 aa)). 4 residues coordinate Mg(2+): Gly-37, Glu-52, Glu-55, and Glu-56. The Nudix box motif lies at 37–58 (GKVAAGETERAALARELAEELG).

The protein belongs to the Nudix hydrolase family. The cofactor is Mg(2+). Mn(2+) serves as cofactor.

The catalysed reaction is 8-oxo-dGTP + H2O = 8-oxo-dGMP + diphosphate + H(+). Functionally, may be involved in the GO system responsible for removing an oxidatively damaged form of guanine (7,8-dihydro-8-oxoguanine, 8-oxo-dGTP) from DNA and the nucleotide pool. 8-oxo-dGTP is inserted opposite dA and dC residues of template DNA with almost equal efficiency thus leading to A.T to G.C transversions. MutT specifically degrades 8-oxo-dGTP to the monophosphate. This Mycobacterium tuberculosis (strain CDC 1551 / Oshkosh) protein is Putative 8-oxo-dGTP diphosphatase 2 (mutT2).